The primary structure comprises 523 residues: Exodeoxyribonuclease 7 large subunit (523 aa).

The disordered stretch occupies residues Pro-502–Phe-523.

Belongs to the XseA family. Heterooligomer composed of large and small subunits.

The protein localises to the cytoplasm. The enzyme catalyses Exonucleolytic cleavage in either 5'- to 3'- or 3'- to 5'-direction to yield nucleoside 5'-phosphates.. Functionally, bidirectionally degrades single-stranded DNA into large acid-insoluble oligonucleotides, which are then degraded further into small acid-soluble oligonucleotides. The polypeptide is Exodeoxyribonuclease 7 large subunit (Rhodospirillum centenum (strain ATCC 51521 / SW)).